A 483-amino-acid chain; its full sequence is Rhamnulokinase (483 aa).

Residue 11 to 15 (ASSGR) participates in ATP binding. Residues Gly-79 and 234-236 (HDT) each bind substrate. The active-site Proton acceptor is Asp-235. ATP is bound at residue Thr-257. Asn-294 contacts substrate. Gln-302 is an ATP binding site. Cys-352 and Cys-369 are disulfide-bonded. Gly-401 provides a ligand contact to ATP.

Belongs to the rhamnulokinase family. Mg(2+) is required as a cofactor.

The enzyme catalyses L-rhamnulose + ATP = L-rhamnulose 1-phosphate + ADP + H(+). It participates in carbohydrate degradation; L-rhamnose degradation; glycerone phosphate from L-rhamnose: step 2/3. In terms of biological role, involved in the catabolism of L-rhamnose (6-deoxy-L-mannose). Catalyzes the transfer of the gamma-phosphate group from ATP to the 1-hydroxyl group of L-rhamnulose to yield L-rhamnulose 1-phosphate. This chain is Rhamnulokinase, found in Listeria innocua serovar 6a (strain ATCC BAA-680 / CLIP 11262).